The following is a 478-amino-acid chain: MTLSFITRWRDELPETYTALSPTPLNNARLIWHNTELANTLSIPSSLFKNGAGVWGGETLLPGMSPLAQVYSGHQFGVWAGQLGDGRGILLGEQLLADGTTMDWHLKGAGLTPYSRMGDGRAVLRSTIRESLASEAMHYLGIPTTRALSIVTSDSPVYRETVEPGAMLMRVAPSHLRFGHFEHFYYRREPDKVRQLADFAIRHYWSHLEDDEDKYRLWFNDVVARTASLIAQWQTVGFAHGVMNTDNMSLLGLTLDYGPFGFLNDYEPGFICNHSDHQGRYSFDNQPAVALWILQRLAQTLSPFVAVDALNEALDSYQQVLLTHYGQRMRQKLGFMTEQKEDNALLNELFSLMARERSDYTRTFRMLSLTEQHSAASPLRDEFIDRAAFDDWFARYRGRLQQDEVSDSERQQLMQSVNPALVLRNWLAQRAIEAAEKGDMTELHRLHEALRNPFSDRDDDYVSRPPDWGKRLEVSCSS.

8 residues coordinate ATP: Gly-84, Gly-86, Arg-87, Lys-107, Asp-119, Gly-120, Arg-170, and Arg-177. Asp-246 acts as the Proton acceptor in catalysis. The Mg(2+) site is built by Asn-247 and Asp-256. Asp-256 lines the ATP pocket.

Belongs to the SELO family. The cofactor is Mg(2+). It depends on Mn(2+) as a cofactor.

The enzyme catalyses L-seryl-[protein] + ATP = 3-O-(5'-adenylyl)-L-seryl-[protein] + diphosphate. The catalysed reaction is L-threonyl-[protein] + ATP = 3-O-(5'-adenylyl)-L-threonyl-[protein] + diphosphate. It carries out the reaction L-tyrosyl-[protein] + ATP = O-(5'-adenylyl)-L-tyrosyl-[protein] + diphosphate. It catalyses the reaction L-histidyl-[protein] + UTP = N(tele)-(5'-uridylyl)-L-histidyl-[protein] + diphosphate. The enzyme catalyses L-seryl-[protein] + UTP = O-(5'-uridylyl)-L-seryl-[protein] + diphosphate. The catalysed reaction is L-tyrosyl-[protein] + UTP = O-(5'-uridylyl)-L-tyrosyl-[protein] + diphosphate. Nucleotidyltransferase involved in the post-translational modification of proteins. It can catalyze the addition of adenosine monophosphate (AMP) or uridine monophosphate (UMP) to a protein, resulting in modifications known as AMPylation and UMPylation. The chain is Protein nucleotidyltransferase YdiU from Escherichia coli O157:H7.